A 356-amino-acid polypeptide reads, in one-letter code: MISKEEILEILNGYDLKNITIATVCSHSSLQIFHGAKQEGFRTLGICIGPPPRFYDAFPLAKPDAFISLDSYKAMLDESDRLIDENAIIIPHGSMVEYLGIQNFEALPVPTFGNRRCLAWESDREMEREWLLRAGVNVPMRFENAELIDRPVIVKYHGAKGGKGFFIAKNKEEFQSKIQQGQKYTIQEFILGTRYYIHFFYSPIREKGYRLRKGTLDMLGIDRRVESNADEIFRIGSVNELEAAGIYPSFVVTGNLPLVLRESLLPKVFDLGERVVETSIELFGGMVGPFSLETIVTDDLDFKVFEISARIVAGTNLFISGSPYSDLIEKGLSTGRRIAQEIALARSMGALGEVIS.

5-amino-1-(5-phospho-beta-D-ribosyl)imidazole-4-carboxamide contacts are provided by His-27 and Ser-94. The ATP-grasp domain occupies 116–333 (RCLAWESDRE…YSDLIEKGLS (218 aa)). ATP-binding positions include 145–196 (AELI…TRYY) and Glu-226. Asn-255 contributes to the 5-amino-1-(5-phospho-beta-D-ribosyl)imidazole-4-carboxamide binding site. Residues Glu-293 and Glu-306 each contribute to the Mg(2+) site.

The protein belongs to the phosphohexose mutase family. Mg(2+) is required as a cofactor. Requires Mn(2+) as cofactor.

It carries out the reaction 5-amino-1-(5-phospho-beta-D-ribosyl)imidazole-4-carboxamide + formate + ATP = 5-formamido-1-(5-phospho-D-ribosyl)imidazole-4-carboxamide + ADP + phosphate. Its pathway is purine metabolism; IMP biosynthesis via de novo pathway; 5-formamido-1-(5-phospho-D-ribosyl)imidazole-4-carboxamide from 5-amino-1-(5-phospho-D-ribosyl)imidazole-4-carboxamide (formate route): step 1/1. In terms of biological role, catalyzes the ATP- and formate-dependent formylation of 5-aminoimidazole-4-carboxamide-1-beta-d-ribofuranosyl 5'-monophosphate (AICAR) to 5-formaminoimidazole-4-carboxamide-1-beta-d-ribofuranosyl 5'-monophosphate (FAICAR) in the absence of folates. The sequence is that of 5-formaminoimidazole-4-carboxamide-1-(beta)-D-ribofuranosyl 5'-monophosphate synthetase from Methanothrix thermoacetophila (strain DSM 6194 / JCM 14653 / NBRC 101360 / PT) (Methanosaeta thermophila).